Reading from the N-terminus, the 125-residue chain is Large ribosomal subunit protein bL12 (125 aa).

The protein belongs to the bacterial ribosomal protein bL12 family. Homodimer. Part of the ribosomal stalk of the 50S ribosomal subunit. Forms a multimeric L10(L12)X complex, where L10 forms an elongated spine to which 2 to 4 L12 dimers bind in a sequential fashion. Binds GTP-bound translation factors.

Functionally, forms part of the ribosomal stalk which helps the ribosome interact with GTP-bound translation factors. Is thus essential for accurate translation. This Thermoanaerobacter sp. (strain X514) protein is Large ribosomal subunit protein bL12.